We begin with the raw amino-acid sequence, 496 residues long: MAQKLDNFPYHIGREIGTGAFASVRLCYDDNAKIYAVKFVNKKHATSCMNAGVWARRMASEIQLHKLCNGHKNIIHFYNTAENPQWRWVVLEFAQGGDLFDKIEPDVGIDEDVAQFYFAQLMEGISFMHSKGVAHRDLKPENILLDYNGNLKISDFGFASLFSYKGKSRLLNSPVGSPPYAAPEITQQYDGSKVDVWSCGIILFALLLGNTPWDEAISNTGDYLLYKKQCERPSYHPWNLLSPGAYSIITGMLRSDPFKRYSVKHVVQHPWLTSSTPFRTKNGNCADPVALASRLMLKLRIDLDKPRLASSRASQNDSGFSMTQPAFKKNDQKELDRVEVYGALSQPVQLNKNIDVTEILEKDPSLSQFCENEGFIKRLAKKAKNFYEICPPERLTRFYSRASRETIIDHLYDSLRLLAISVTMKYVRNQTILYVNLHDKRKCLLQGVIELTNLGHNLELINFIKRNGDPLEWRKFFKNVVSSIGKPIVLTDVSQN.

The region spanning 10–272 (YHIGREIGTG…VKHVVQHPWL (263 aa)) is the Protein kinase domain. ATP contacts are provided by residues 16 to 24 (IGTGAFASV) and K38. D137 acts as the Proton acceptor in catalysis.

It belongs to the protein kinase superfamily. CAMK Ser/Thr protein kinase family. NIM1 subfamily. In terms of assembly, interacts with crb2. Interacts with rad3. Interacts with rfp1. In terms of processing, phosphorylated.

It is found in the nucleus. The catalysed reaction is L-seryl-[protein] + ATP = O-phospho-L-seryl-[protein] + ADP + H(+). It catalyses the reaction L-threonyl-[protein] + ATP = O-phospho-L-threonyl-[protein] + ADP + H(+). Functionally, serine/threonine-protein kinase which is required for checkpoint-mediated cell cycle arrest and activation of DNA repair in response to the presence of DNA damage or unreplicated DNA. May also negatively regulate cell cycle progression during unperturbed cell cycles. Binds to and phosphorylates CDC25. This leads to negative regulation of CDC25 and prevents mitotic entry. This Schizosaccharomyces pombe (strain 972 / ATCC 24843) (Fission yeast) protein is Serine/threonine-protein kinase chk1 (chk1).